The chain runs to 252 residues: Pyridoxine 5'-phosphate synthase (252 aa).

Positions 8 and 19 each coordinate 3-amino-2-oxopropyl phosphate. The Proton acceptor role is filled by histidine 44. Arginine 46 and histidine 51 together coordinate 1-deoxy-D-xylulose 5-phosphate. The active-site Proton acceptor is the glutamate 75. Threonine 110 is a 1-deoxy-D-xylulose 5-phosphate binding site. Histidine 201 acts as the Proton donor in catalysis. 3-amino-2-oxopropyl phosphate-binding positions include aspartate 202 and 224-225 (GH).

This sequence belongs to the PNP synthase family. As to quaternary structure, homooctamer; tetramer of dimers.

The protein resides in the cytoplasm. It catalyses the reaction 3-amino-2-oxopropyl phosphate + 1-deoxy-D-xylulose 5-phosphate = pyridoxine 5'-phosphate + phosphate + 2 H2O + H(+). Its pathway is cofactor biosynthesis; pyridoxine 5'-phosphate biosynthesis; pyridoxine 5'-phosphate from D-erythrose 4-phosphate: step 5/5. In terms of biological role, catalyzes the complicated ring closure reaction between the two acyclic compounds 1-deoxy-D-xylulose-5-phosphate (DXP) and 3-amino-2-oxopropyl phosphate (1-amino-acetone-3-phosphate or AAP) to form pyridoxine 5'-phosphate (PNP) and inorganic phosphate. In Albidiferax ferrireducens (strain ATCC BAA-621 / DSM 15236 / T118) (Rhodoferax ferrireducens), this protein is Pyridoxine 5'-phosphate synthase.